Consider the following 125-residue polypeptide: Small ribosomal subunit protein bS6 (125 aa).

Positions 99 to 125 (ASPMVKAKDERRASAEVENNDFEDAEE) are disordered. The span at 104-113 (KAKDERRASA) shows a compositional bias: basic and acidic residues. Over residues 116–125 (ENNDFEDAEE) the composition is skewed to acidic residues.

Belongs to the bacterial ribosomal protein bS6 family.

Its function is as follows. Binds together with bS18 to 16S ribosomal RNA. The sequence is that of Small ribosomal subunit protein bS6 from Mannheimia succiniciproducens (strain KCTC 0769BP / MBEL55E).